The sequence spans 313 residues: Biotin synthase (313 aa).

In terms of domain architecture, Radical SAM core spans 28–258 (NFGNDIELCS…LFPQARLRLS (231 aa)). [4Fe-4S] cluster is bound by residues cysteine 46, cysteine 50, and cysteine 53. The [2Fe-2S] cluster site is built by cysteine 90, cysteine 121, cysteine 181, and arginine 256.

Belongs to the radical SAM superfamily. Biotin synthase family. As to quaternary structure, homodimer. The cofactor is [4Fe-4S] cluster. [2Fe-2S] cluster serves as cofactor.

The enzyme catalyses (4R,5S)-dethiobiotin + (sulfur carrier)-SH + 2 reduced [2Fe-2S]-[ferredoxin] + 2 S-adenosyl-L-methionine = (sulfur carrier)-H + biotin + 2 5'-deoxyadenosine + 2 L-methionine + 2 oxidized [2Fe-2S]-[ferredoxin]. Its pathway is cofactor biosynthesis; biotin biosynthesis; biotin from 7,8-diaminononanoate: step 2/2. In terms of biological role, catalyzes the conversion of dethiobiotin (DTB) to biotin by the insertion of a sulfur atom into dethiobiotin via a radical-based mechanism. The polypeptide is Biotin synthase (Francisella tularensis subsp. tularensis (strain FSC 198)).